The following is a 124-amino-acid chain: Small ribosomal subunit protein eS25 (124 aa).

Residues 1-22 are compositionally biased toward basic and acidic residues; the sequence is MPPKDSKQKKDAGKSKKDKDPV. Residues 1 to 37 are disordered; it reads MPPKDSKQKKDAGKSKKDKDPVNKSGGKAKKKKWSKG. Positions 27 to 37 are enriched in basic residues; it reads GKAKKKKWSKG.

This sequence belongs to the eukaryotic ribosomal protein eS25 family. In terms of assembly, component of the small ribosomal subunit.

It is found in the cytoplasm. Component of the small ribosomal subunit. The ribosome is a large ribonucleoprotein complex responsible for the synthesis of proteins in the cell. The protein is Small ribosomal subunit protein eS25 (rps25) of Danio rerio (Zebrafish).